Here is a 412-residue protein sequence, read N- to C-terminus: Glutamate-1-semialdehyde 2,1-aminomutase (412 aa).

Residue K260 is modified to N6-(pyridoxal phosphate)lysine.

Belongs to the class-III pyridoxal-phosphate-dependent aminotransferase family. HemL subfamily. The cofactor is pyridoxal 5'-phosphate.

It localises to the cytoplasm. The catalysed reaction is (S)-4-amino-5-oxopentanoate = 5-aminolevulinate. It participates in porphyrin-containing compound metabolism; protoporphyrin-IX biosynthesis; 5-aminolevulinate from L-glutamyl-tRNA(Glu): step 2/2. The sequence is that of Glutamate-1-semialdehyde 2,1-aminomutase from Methanocorpusculum labreanum (strain ATCC 43576 / DSM 4855 / Z).